An 86-amino-acid polypeptide reads, in one-letter code: Beta-toxin To4 (86 aa).

The N-terminal stretch at 1–20 is a signal peptide; the sequence is MTRFVLFISCFFLIGMIVEC. An LCN-type CS-alpha/beta domain is found at 21–83; that stretch reads KDGYLMEYGG…IWNRATNKCG (63 aa). 4 cysteine pairs are disulfide-bonded: Cys31-Cys82, Cys35-Cys57, Cys43-Cys63, and Cys47-Cys65. Residue Cys82 is modified to Cysteine amide.

It belongs to the long (4 C-C) scorpion toxin superfamily. Sodium channel inhibitor family. Beta subfamily. In terms of tissue distribution, expressed by the venom gland.

It localises to the secreted. Beta toxins bind voltage-independently at site-4 of sodium channels (Nav) and shift the voltage of activation toward more negative potentials thereby affecting sodium channel activation and promoting spontaneous and repetitive firing. This toxin shows moderate inhibition of Nav1.1/SCN1A, Nav1.2/SCN2A, and Nav1.4/SCN4A, and promotes a left voltage shift on these channels. It exhibits similar potency on Nav1.2/SCN2A and Nav1.4/SCN4A (40-50% peak current inhibition at 0.5 uM), and weaker inhibition on Nav1.2 (20-30% peak current inhibition at 0.5 uM). This chain is Beta-toxin To4, found in Tityus obscurus (Amazonian scorpion).